The sequence spans 511 residues: MSASTSRTLPPEIAESVSVMALIERGKAEGQIAGDDVRRAFEADQIPATQWKNVLRSLNQILEEEGVTLMVSAAEPKRTRKSVAAKSPAKRTATKAVAAKPVTSRKATAPAAPAAPATEPAAVEEEAPAKKAAAKKTTAKKATAKKTTAKKAAAKKTTAKKEDGELLEDEATEEPKAATEEPEGTENAGFVLSDEDEDDAPAQQVAAAGATADPVKDYLKQIGKVPLLNAEQEVELAKRIEAGLFAEDKLANSDKLAPKLKRELEIIAEDGRRAKNHLLEANLRLVVSLAKRYTGRGMLFLDLIQEGNLGLIRAVEKFDYTKGYKFSTYATWWIRQAITRAMADQARTIRIPVHMVEVINKLARVQRQMLQDLGREPTPEELAKELDMTPEKVIEVQKYGREPISLHTPLGEDGDSEFGDLIEDSEAVVPADAVSFTLLQEQLHSVLDTLSEREAGVVSMRFGLTDGQPKTLDEIGKVYGVTRERIRQIESKTMSKLRHPSRSQVLRDYLD.

Positions 72-186 are disordered; that stretch reads SAAEPKRTRK…AATEEPEGTE (115 aa). The segment covering 78 to 93 has biased composition (basic residues); the sequence is RTRKSVAAKSPAKRTA. The segment covering 94-121 has biased composition (low complexity); it reads TKAVAAKPVTSRKATAPAAPAAPATEPA. The span at 132–158 shows a compositional bias: basic residues; sequence AAAKKTTAKKATAKKTTAKKAAAKKTT. The binds RNA polymerase-binding protein RbpA stretch occupies residues 211 to 347; it reads TADPVKDYLK…ITRAMADQAR (137 aa). Positions 278–348 are sigma-70 factor domain-2; it reads LLEANLRLVV…TRAMADQART (71 aa). An Interaction with polymerase core subunit RpoC motif is present at residues 302 to 305; that stretch reads DLIQ. Residues 357-433 form a sigma-70 factor domain-3 region; it reads EVINKLARVQ…DSEAVVPADA (77 aa). The sigma-70 factor domain-4 stretch occupies residues 446–499; sequence VLDTLSEREAGVVSMRFGLTDGQPKTLDEIGKVYGVTRERIRQIESKTMSKLRH. The segment at residues 472–491 is a DNA-binding region (H-T-H motif); it reads LDEIGKVYGVTRERIRQIES.

It belongs to the sigma-70 factor family. As to quaternary structure, homotrimer (Potential). interacts transiently with the RNA polymerase core complex. Interacts with RNA polymerase-binding protein RbpA via its sigma-2 region (residues 211-347) in a free form.

In terms of biological role, sigma factors are initiation factors that promote the attachment of RNA polymerase to specific initiation sites and are then released. This sigma factor is the primary sigma factor during exponential growth. Its activity is stimulated by RbpA. This Streptomyces coelicolor (strain ATCC BAA-471 / A3(2) / M145) protein is RNA polymerase principal sigma factor HrdB (hrdB).